The chain runs to 911 residues: Anoctamin-6 (911 aa).

Over 1-301 the chain is Cytoplasmic; the sequence is MQMMTRKVLL…YGEKIGIYFA (301 aa). Residues 302-322 form a helical membrane-spanning segment; the sequence is WLGYYTQMLLLAAVVGVACFL. Residues 323-376 are Extracellular-facing; sequence YGYLDQDNCTWSKEVCDPDIGGQILMCPQCDRLCPFWRLNITCESSKKLCIFDS. N-linked (GlcNAc...) asparagine glycosylation occurs at N330. Disulfide bonds link C331/C372, C338/C365, C349/C807, C352/C356, and C596/C601. The N-linked (GlcNAc...) asparagine glycan is linked to N362. A helical transmembrane segment spans residues 377–397; sequence FGTLIFAVFMGVWVTLFLEFW. The Cytoplasmic segment spans residues 398–456; sequence KRRQAELEYEWDTVELQQEEQARPEYEAQCNHVVINEITQEEERIPFTTCGKCIRVTLC. Residues 457-477 traverse the membrane as a helical segment; that stretch reads ASAVFFWILLIIASVIGIIVY. At 478-510 the chain is on the extracellular side; that stretch reads RLSVFIVFSTTLPKNPNGTDPIQKYLTPQMATS. N-linked (GlcNAc...) asparagine glycosylation occurs at N494. The chain crosses the membrane as a helical span at residues 511–531; that stretch reads ITASIISFIIIMILNTIYEKV. Residues 532-552 lie on the Cytoplasmic side of the membrane; the sequence is AIMITNFELPRTQTDYENSLT. Residues 553-573 form a helical membrane-spanning segment; it reads MKMFLFQFVNYYSSCFYIAFF. The Extracellular portion of the chain corresponds to 574–602; it reads KGKFVGYPGDPVYLLGKYRSEECDPGGCL. Residues 603 to 622 traverse the membrane as a helical segment; the sequence is LELTTQLTIIMGGKAIWNNI. Topologically, residues 623 to 664 are cytoplasmic; that stretch reads QEVLLPWVMNLIGRYKRVSGSEKITPRWEQDYHLQPMGKLGL. 3 residues coordinate Ca(2+): E624, E667, and E670. 2 helical membrane passes run 665–685 and 686–706; these read FYEY…VASF and PLAP…DAWK. Residues 707–723 lie on the Cytoplasmic side of the membrane; it reads LTTQFRRMVPEKAQDIG. Residues 724 to 744 form a helical membrane-spanning segment; it reads AWQPIMQGIAILAVVTNAMII. Residues 745–837 are Extracellular-facing; it reads AFTSDMIPRL…YWHVIAAKLA (93 aa). N-linked (GlcNAc...) asparagine glycans are attached at residues N778, N785, and N803. Residues 838-858 form a helical membrane-spanning segment; sequence FIIVMEHIIYSVKFFISYAIP. Residues 859–911 lie on the Cytoplasmic side of the membrane; the sequence is DVSKITKSKIKREKYLTQKLLHESHLKDLTKNMGIIAERIGGTVDNSVRPKLE.

Belongs to the anoctamin family. In terms of assembly, homodimer. In terms of tissue distribution, predominant expression seen in epithelial tissues. Also found in skeletal system where it is primarily expressed in osteoblasts.

The protein localises to the cell membrane. The enzyme catalyses a 1,2-diacyl-sn-glycero-3-phospho-L-serine(in) = a 1,2-diacyl-sn-glycero-3-phospho-L-serine(out). It carries out the reaction a beta-D-galactosyl-(1&lt;-&gt;1')-N-acylsphing-4-enine(out) = a beta-D-galactosyl-(1&lt;-&gt;1')-N-acylsphing-4-enine(in). It catalyses the reaction a 1,2-diacyl-sn-glycero-3-phosphocholine(in) = a 1,2-diacyl-sn-glycero-3-phosphocholine(out). Exhibits synergistic gating by Ca(2+) and voltage. Inhibited by some non-specific cation channel blockers such as: ruthenium red, 2-aminoethyl diphenylborinate (2APB), gadolinium and cadmium ions. Its function is as follows. Small-conductance calcium-activated nonselective cation (SCAN) channel which acts as a regulator of phospholipid scrambling in platelets, osteoblasts and fetal thymocytes. Phospholipid scrambling results in surface exposure of phosphatidylserine which in platelets is essential to trigger the clotting system whereas in osteoblasts is essential for the deposition of hydroxyapatite during bone mineralization. Has calcium-dependent phospholipid scramblase activity; scrambles phosphatidylserine, phosphatidylcholine and galactosylceramide. Can generate outwardly rectifying chloride channel currents in airway epithelial cells and Jurkat T lymphocytes. In Mus musculus (Mouse), this protein is Anoctamin-6 (Ano6).